The primary structure comprises 644 residues: Chaperone protein DnaK (644 aa).

A Phosphothreonine; by autocatalysis modification is found at T199. The tract at residues 605 to 644 (KKSSEGQAAQGQTQSQESTKPVEEGVVDAEFEEVKEEDKK) is disordered. Residues 609 to 623 (EGQAAQGQTQSQEST) show a composition bias toward polar residues. The segment covering 629 to 644 (GVVDAEFEEVKEEDKK) has biased composition (acidic residues).

This sequence belongs to the heat shock protein 70 family.

Acts as a chaperone. This is Chaperone protein DnaK from Legionella pneumophila (strain Paris).